A 512-amino-acid polypeptide reads, in one-letter code: Putative ribose/galactose/methyl galactoside import ATP-binding protein 2 (512 aa).

2 ABC transporter domains span residues 14-251 (IALT…VGRQ) and 262-507 (TSGN…TQRE). Residue 46–53 (GENGAGKS) coordinates ATP.

The protein belongs to the ABC transporter superfamily. Carbohydrate importer 2 (CUT2) (TC 3.A.1.2) family.

It is found in the cell inner membrane. It carries out the reaction D-ribose(out) + ATP + H2O = D-ribose(in) + ADP + phosphate + H(+). The enzyme catalyses D-galactose(out) + ATP + H2O = D-galactose(in) + ADP + phosphate + H(+). Functionally, part of an ABC transporter complex involved in carbohydrate import. Could be involved in ribose, galactose and/or methyl galactoside import. Responsible for energy coupling to the transport system. The chain is Putative ribose/galactose/methyl galactoside import ATP-binding protein 2 from Burkholderia cenocepacia (strain HI2424).